We begin with the raw amino-acid sequence, 339 residues long: Protein RecA (339 aa).

73–80 (GPESSGKT) provides a ligand contact to ATP.

Belongs to the RecA family.

It is found in the cytoplasm. Its function is as follows. Can catalyze the hydrolysis of ATP in the presence of single-stranded DNA, the ATP-dependent uptake of single-stranded DNA by duplex DNA, and the ATP-dependent hybridization of homologous single-stranded DNAs. It interacts with LexA causing its activation and leading to its autocatalytic cleavage. This chain is Protein RecA, found in Mycoplasmopsis pulmonis (strain UAB CTIP) (Mycoplasma pulmonis).